We begin with the raw amino-acid sequence, 349 residues long: Quinolinate synthase (349 aa).

2 residues coordinate iminosuccinate: His52 and Ser69. Cys114 lines the [4Fe-4S] cluster pocket. Residues 140–142 (YFN) and Ser157 each bind iminosuccinate. Cys201 is a binding site for [4Fe-4S] cluster. Iminosuccinate contacts are provided by residues 227-229 (HPE) and Thr255. Residue Cys300 participates in [4Fe-4S] cluster binding.

Belongs to the quinolinate synthase family. Type 2 subfamily. It depends on [4Fe-4S] cluster as a cofactor.

Its subcellular location is the cytoplasm. The catalysed reaction is iminosuccinate + dihydroxyacetone phosphate = quinolinate + phosphate + 2 H2O + H(+). It participates in cofactor biosynthesis; NAD(+) biosynthesis; quinolinate from iminoaspartate: step 1/1. Functionally, catalyzes the condensation of iminoaspartate with dihydroxyacetone phosphate to form quinolinate. The polypeptide is Quinolinate synthase (Mycolicibacterium paratuberculosis (strain ATCC BAA-968 / K-10) (Mycobacterium paratuberculosis)).